The following is a 1097-amino-acid chain: Protein STICHEL-like 3 (1097 aa).

Disordered stretches follow at residues 1 to 22 (MTTT…NNRI), 74 to 168 (SLRD…YRIG), 220 to 293 (NVRP…GFGE), 321 to 358 (GRSL…DSSS), and 400 to 436 (DSDL…LTEK). Positions 10-20 (RVASSSSTRNN) are enriched in polar residues. A compositionally biased stretch (basic and acidic residues) spans 95 to 113 (LPKKGDLVEGGRRSVDLKK). The span at 126 to 136 (PVVNFGTSKVT) shows a compositional bias: polar residues. Residues 137-168 (PSDERSGPVSGERDSGRRVKREESSRKSYRIG) show a composition bias toward basic and acidic residues. The span at 227-241 (YGGGGGGGNTRGCAG) shows a compositional bias: gly residues. Basic residues predominate over residues 245-259 (RPKRRKFRGTRRVRG). Composition is skewed to basic and acidic residues over residues 281 to 291 (VEKHDGEKEGF) and 332 to 345 (KGGR…RNGS). Low complexity predominate over residues 346–358 (DKMMIQSDDDSSS). Basic residues predominate over residues 411 to 429 (EKKHKKKSHVNARHRHRQQ). 472-479 (GPNGTGKT) serves as a coordination point for ATP. Zn(2+) contacts are provided by cysteine 491, cysteine 500, cysteine 503, and cysteine 506. Residues 742 to 770 (KEDMEKLRQALKTLSEAEKQLRVSNDKLT) are a coiled coil. 3 disordered regions span residues 790–828 (SSTA…DSRK), 913–932 (DPRN…DKSL), and 956–1003 (VTES…SQSI). Composition is skewed to basic and acidic residues over residues 796-807 (GGRESSDHHLDP) and 818-828 (GLDRRRGDSRK). Over residues 993 to 1003 (ASQSQNQSQSI) the composition is skewed to polar residues.

This sequence belongs to the DnaX/STICHEL family.

In Arabidopsis thaliana (Mouse-ear cress), this protein is Protein STICHEL-like 3.